The primary structure comprises 415 residues: Stimulator of interferon genes protein (415 aa).

The 135-residue stretch at 29-163 (HVYHAFISYC…DIIQAISKPE (135 aa)) folds into the TIR domain. E104 is an active-site residue. Residue R256 coordinates 2',3'-cGAMP. A disordered region spans residues 387-415 (KSPSSTNMVKSEPNIYREESGKTKSVERG). Over residues 401-415 (IYREESGKTKSVERG) the composition is skewed to basic and acidic residues.

In the N-terminal section; belongs to the Toll-like receptor family. The protein in the C-terminal section; belongs to the TMEM173 family. As to quaternary structure, homodimer.

It carries out the reaction NAD(+) + H2O = ADP-D-ribose + nicotinamide + H(+). Its function is as follows. Sensor of cytosolic DNA from bacteria and viruses that promotes autophagy. Binds c-di-AMP, 2'3'-cGAMP, 3'3'-cGAMP and to a lesser extent c-di-GMP. Nucleotide binding has not been seen to stimulate NAD(+) hydrolase activity. In Magallana gigas (Pacific oyster), this protein is Stimulator of interferon genes protein.